A 375-amino-acid chain; its full sequence is Succinyl-diaminopimelate desuccinylase (375 aa).

His66 is a Zn(2+) binding site. Asp68 is a catalytic residue. Asp99 contacts Zn(2+). Glu133 (proton acceptor) is an active-site residue. Residues Glu134, Glu162, and His348 each contribute to the Zn(2+) site.

The protein belongs to the peptidase M20A family. DapE subfamily. In terms of assembly, homodimer. Zn(2+) is required as a cofactor. Co(2+) serves as cofactor.

The enzyme catalyses N-succinyl-(2S,6S)-2,6-diaminopimelate + H2O = (2S,6S)-2,6-diaminopimelate + succinate. Its pathway is amino-acid biosynthesis; L-lysine biosynthesis via DAP pathway; LL-2,6-diaminopimelate from (S)-tetrahydrodipicolinate (succinylase route): step 3/3. Catalyzes the hydrolysis of N-succinyl-L,L-diaminopimelic acid (SDAP), forming succinate and LL-2,6-diaminopimelate (DAP), an intermediate involved in the bacterial biosynthesis of lysine and meso-diaminopimelic acid, an essential component of bacterial cell walls. The polypeptide is Succinyl-diaminopimelate desuccinylase (Shigella boydii serotype 18 (strain CDC 3083-94 / BS512)).